We begin with the raw amino-acid sequence, 215 residues long: Cytochrome b6 (215 aa).

The helical transmembrane segment at 32–52 (IFYCLGGITLTCFLVQVATGF) threads the bilayer. Heme c is bound at residue C35. Positions 86 and 100 each coordinate heme b. The next 3 helical transmembrane spans lie at 90–110 (ASMMVLMMILHVFRVYLTGGF), 116–136 (LTWVTGVVLAVLTASFGVTGY), and 186–206 (LHTFVLPLLTAVFMLMHFLMI). Positions 187 and 202 each coordinate heme b.

It belongs to the cytochrome b family. PetB subfamily. The 4 large subunits of the cytochrome b6-f complex are cytochrome b6, subunit IV (17 kDa polypeptide, PetD), cytochrome f and the Rieske protein, while the 4 small subunits are PetG, PetL, PetM and PetN. The complex functions as a dimer. Heme b serves as cofactor. It depends on heme c as a cofactor.

It localises to the plastid. Its subcellular location is the chloroplast thylakoid membrane. In terms of biological role, component of the cytochrome b6-f complex, which mediates electron transfer between photosystem II (PSII) and photosystem I (PSI), cyclic electron flow around PSI, and state transitions. The sequence is that of Cytochrome b6 from Hordeum vulgare (Barley).